The sequence spans 207 residues: Phosphatidylinositol phosphate synthase (207 aa).

Transmembrane regions (helical) follow at residues 21–44 (LRAHVTPDVVTWIGTIGAVLMALI) and 50–67 (WLWQGPWLVTLFIFSDSL). 28 to 31 (DVVT) serves as a coordination point for a CDP-1,2-diacyl-sn-glycerol. Asp-65 and Asp-68 together coordinate Mg(2+). The a CDP-1,2-diacyl-sn-glycerol site is built by Gly-69, Arg-73, and Ser-79. Positions 86 and 90 each coordinate Mg(2+). 4 helical membrane passes run 88-106 (TLDRFGDAAIFTGVALYFA), 112-131 (VLWTAMACAALVFGMATSYV), 152-170 (RLLVSLVAIEITGLARVGA), and 176-195 (VVALPIALCYLTLAGAITVV). Asp-90 functions as the Proton acceptor in the catalytic mechanism.

It belongs to the CDP-alcohol phosphatidyltransferase class-I family. Homodimer. Requires Mg(2+) as cofactor.

Its subcellular location is the cell membrane. It carries out the reaction a CDP-1,2-diacyl-sn-glycerol + 1D-myo-inositol 3-phosphate = a 1,2-diacyl-sn-glycero-3-phospho-(1D-myo-inositol-3-phosphate) + CMP + H(+). The enzyme catalyses 1,2-di-(9Z-octadecenoyl)-sn-glycero-3-cytidine-5'-diphosphate + 1D-myo-inositol 3-phosphate = 1,2-di-(9Z-octadecenoyl)-sn-glycero-3-phospho-(1D-myo-inositol-3-phosphate) + CMP + H(+). It functions in the pathway phospholipid metabolism; phosphatidylinositol phosphate biosynthesis. Its function is as follows. Catalyzes the conjugation of the 1'-hydroxyl group of D-myo-inositol-3-phosphate (also named L-myo-inositol-1-phosphate) with a lipid tail of cytidine diphosphate diacylglycerol (CDP-DAG), forming phosphatidylinositol phosphate (PIP) and CMP. PIP is a precursor of phosphatidylinositol (PI) which is an essential lipid required for cell wall formation. The polypeptide is Phosphatidylinositol phosphate synthase (Cutibacterium acnes (strain DSM 16379 / KPA171202) (Propionibacterium acnes)).